A 191-amino-acid polypeptide reads, in one-letter code: dTTP/UTP pyrophosphatase (191 aa).

D70 functions as the Proton acceptor in the catalytic mechanism.

It belongs to the Maf family. YhdE subfamily. Requires a divalent metal cation as cofactor.

It is found in the cytoplasm. It carries out the reaction dTTP + H2O = dTMP + diphosphate + H(+). The catalysed reaction is UTP + H2O = UMP + diphosphate + H(+). Functionally, nucleoside triphosphate pyrophosphatase that hydrolyzes dTTP and UTP. May have a dual role in cell division arrest and in preventing the incorporation of modified nucleotides into cellular nucleic acids. This is dTTP/UTP pyrophosphatase from Clostridium novyi (strain NT).